Here is a 475-residue protein sequence, read N- to C-terminus: Sulfate adenylyltransferase subunit 1 (475 aa).

The tr-type G domain maps to 25-239; sequence KSLLRFLTCG…EVLETVEIQR (215 aa). Residues 34–41 are G1; that stretch reads GSVDDGKS. 34-41 contacts GTP; it reads GSVDDGKS. Residues 92 to 96 form a G2 region; that stretch reads GITID. A G3 region spans residues 113–116; that stretch reads DTPG. GTP is bound by residues 113-117 and 168-171; these read DTPGH and NKMD. The interval 168 to 171 is G4; that stretch reads NKMD. Positions 206-208 are G5; the sequence is SAL.

It belongs to the TRAFAC class translation factor GTPase superfamily. Classic translation factor GTPase family. CysN/NodQ subfamily. As to quaternary structure, heterodimer composed of CysD, the smaller subunit, and CysN.

It carries out the reaction sulfate + ATP + H(+) = adenosine 5'-phosphosulfate + diphosphate. It functions in the pathway sulfur metabolism; hydrogen sulfide biosynthesis; sulfite from sulfate: step 1/3. Functionally, with CysD forms the ATP sulfurylase (ATPS) that catalyzes the adenylation of sulfate producing adenosine 5'-phosphosulfate (APS) and diphosphate, the first enzymatic step in sulfur assimilation pathway. APS synthesis involves the formation of a high-energy phosphoric-sulfuric acid anhydride bond driven by GTP hydrolysis by CysN coupled to ATP hydrolysis by CysD. The sequence is that of Sulfate adenylyltransferase subunit 1 from Escherichia coli (strain UTI89 / UPEC).